Reading from the N-terminus, the 500-residue chain is Aspartyl/glutamyl-tRNA(Asn/Gln) amidotransferase subunit B (500 aa).

Belongs to the GatB/GatE family. GatB subfamily. As to quaternary structure, heterotrimer of A, B and C subunits.

It catalyses the reaction L-glutamyl-tRNA(Gln) + L-glutamine + ATP + H2O = L-glutaminyl-tRNA(Gln) + L-glutamate + ADP + phosphate + H(+). It carries out the reaction L-aspartyl-tRNA(Asn) + L-glutamine + ATP + H2O = L-asparaginyl-tRNA(Asn) + L-glutamate + ADP + phosphate + 2 H(+). Allows the formation of correctly charged Asn-tRNA(Asn) or Gln-tRNA(Gln) through the transamidation of misacylated Asp-tRNA(Asn) or Glu-tRNA(Gln) in organisms which lack either or both of asparaginyl-tRNA or glutaminyl-tRNA synthetases. The reaction takes place in the presence of glutamine and ATP through an activated phospho-Asp-tRNA(Asn) or phospho-Glu-tRNA(Gln). This chain is Aspartyl/glutamyl-tRNA(Asn/Gln) amidotransferase subunit B, found in Brucella anthropi (strain ATCC 49188 / DSM 6882 / CCUG 24695 / JCM 21032 / LMG 3331 / NBRC 15819 / NCTC 12168 / Alc 37) (Ochrobactrum anthropi).